The primary structure comprises 420 residues: ATP-dependent Clp protease ATP-binding subunit ClpX (420 aa).

The 55-residue stretch at 3–57 folds into the ClpX-type ZB domain; that stretch reads KKTPGTNGKQKLFCSFCGKEQDAVKRLVAGPGVYICDECISLCNEIIAEDHEHSH. Residues Cys-16, Cys-19, Cys-38, and Cys-41 each contribute to the Zn(2+) site. Residue 122 to 129 coordinates ATP; sequence PTGSGKTL.

This sequence belongs to the ClpX chaperone family. Component of the ClpX-ClpP complex. Forms a hexameric ring that, in the presence of ATP, binds to fourteen ClpP subunits assembled into a disk-like structure with a central cavity, resembling the structure of eukaryotic proteasomes.

Its function is as follows. ATP-dependent specificity component of the Clp protease. It directs the protease to specific substrates. Can perform chaperone functions in the absence of ClpP. This Leptospira borgpetersenii serovar Hardjo-bovis (strain L550) protein is ATP-dependent Clp protease ATP-binding subunit ClpX.